Reading from the N-terminus, the 144-residue chain is Large ribosomal subunit protein uL15 (144 aa).

The interval 1–54 is disordered; that stretch reads MRLNTLSPAAGSKHAPKRVGRGMGSGLGKTAGRGHKGQKSRSGGGVRPGFEGGQ. 2 stretches are compositionally biased toward gly residues: residues 21–31 and 42–52; these read RGMGSGLGKTA and SGGGVRPGFEG.

It belongs to the universal ribosomal protein uL15 family. Part of the 50S ribosomal subunit.

Functionally, binds to the 23S rRNA. The sequence is that of Large ribosomal subunit protein uL15 from Shewanella baltica (strain OS223).